Here is a 151-residue protein sequence, read N- to C-terminus: Nucleoside diphosphate kinase (151 aa).

ATP contacts are provided by lysine 9, phenylalanine 57, arginine 86, threonine 92, arginine 103, and asparagine 113. The active-site Pros-phosphohistidine intermediate is the histidine 116.

Belongs to the NDK family. Homotetramer. The cofactor is Mg(2+).

Its subcellular location is the cytoplasm. The enzyme catalyses a 2'-deoxyribonucleoside 5'-diphosphate + ATP = a 2'-deoxyribonucleoside 5'-triphosphate + ADP. The catalysed reaction is a ribonucleoside 5'-diphosphate + ATP = a ribonucleoside 5'-triphosphate + ADP. Major role in the synthesis of nucleoside triphosphates other than ATP. The ATP gamma phosphate is transferred to the NDP beta phosphate via a ping-pong mechanism, using a phosphorylated active-site intermediate. The polypeptide is Nucleoside diphosphate kinase (Chloroflexus aggregans (strain MD-66 / DSM 9485)).